A 145-amino-acid chain; its full sequence is Basic phospholipase A2 PC17 (145 aa).

Residues 1–21 (MYPAHLLLLLAVCVSLLGASA) form the signal peptide. A propeptide spanning residues 22 to 27 (IPPLPL) is cleaved from the precursor. 7 disulfide bridges follow: cysteine 38-cysteine 98, cysteine 54-cysteine 144, cysteine 56-cysteine 72, cysteine 71-cysteine 125, cysteine 78-cysteine 118, cysteine 87-cysteine 111, and cysteine 105-cysteine 116. Ca(2+) contacts are provided by tyrosine 55, glycine 57, and glycine 59. Residue histidine 75 is part of the active site. Aspartate 76 lines the Ca(2+) pocket. The active site involves aspartate 119.

It belongs to the phospholipase A2 family. Group I subfamily. D49 sub-subfamily. Ca(2+) is required as a cofactor.

It localises to the secreted. It carries out the reaction a 1,2-diacyl-sn-glycero-3-phosphocholine + H2O = a 1-acyl-sn-glycero-3-phosphocholine + a fatty acid + H(+). Its function is as follows. PLA2 catalyzes the calcium-dependent hydrolysis of the 2-acyl groups in 3-sn-phosphoglycerides. This is Basic phospholipase A2 PC17 from Laticauda laticaudata (Blue-ringed sea krait).